Consider the following 245-residue polypeptide: DNA repair protein RecO (245 aa).

Belongs to the RecO family.

Functionally, involved in DNA repair and RecF pathway recombination. The polypeptide is DNA repair protein RecO (Klebsiella pneumoniae (strain 342)).